The following is a 322-amino-acid chain: Probable F-box protein At1g60180 (322 aa).

Residues Phe-45–Leu-88 enclose the F-box domain.

This chain is Probable F-box protein At1g60180, found in Arabidopsis thaliana (Mouse-ear cress).